We begin with the raw amino-acid sequence, 1025 residues long: Transcription factor tau 131 kDa subunit (1025 aa).

The span at 1–26 shows a compositional bias: basic and acidic residues; it reads MAAGKLKKEQQNQSAERESADTGKVN. The disordered stretch occupies residues 1–71; it reads MAAGKLKKEQ…EDEYNSERDS (71 aa). A compositionally biased stretch (acidic residues) spans 46-65; that stretch reads DEEYDDEDVPHDLQLSEDEY. TPR repeat units lie at residues 128–161, 162–195, 196–229, 230–263, and 264–297; these read VAQLLSQANEAFVRNDLQVAERLFNEVIKKDARN, FAAYETLGDIYQLQGRLNDCCNSWFLAAHLNASD, WEFWKIVAILSADLDHVRQAIYCFSRVISLNPME, WESIYRRSMLYKKTGQLARALDGFQRLYMYNPYD, and ANILRELAILYVDYDRIEDSIELYMKVFNANVER. Residues 128–569 form a sufficient to bind BDP1 region; it reads VAQLLSQANE…VDVVEMRKHQ (442 aa). Residues 309–334 are disordered; that stretch reads LDSSDEESAAEGEDADEKEPLEQDED. Position 311 is a phosphoserine (Ser-311). The span at 311-325 shows a compositional bias: acidic residues; that stretch reads SSDEESAAEGEDADE. 6 TPR repeats span residues 432 to 465, 467 to 501, 502 to 535, 536 to 569, 875 to 908, and 959 to 992; these read IDIRVRLGLLRLNTDNLVEALNHFQCLYDETFSD, ADLYFEAATALTRAEKYKEAIDFFTPLLSLEEWRT, TDVFKPLARCYKEIESYETAKEFYELAIKSEPDD, LDIRVSLAEVYYRLNDPETFKHMLVDVVEMRKHQ, PYLYYIYAVLLYSSRGFLSALQYLTRLEEDIPDD, and QEADYNLGRAFHLIGLVSIAIEYYNRVLENYDDG.

As to quaternary structure, component of the TFIIIC complex composed of TFC1, TFC3, TFC4, TFC6, TFC7 and TFC8. The subunits are organized in two globular domains, tauA and tauB, connected by a proteolysis-sensitive and flexible linker. Interacts with TFC1, TFC3, TFC6, TFIIIB subunits BRF1 and BDP1, and with RNA polymerase III subunit RPC10. Phosphorylated.

The protein localises to the nucleus. Its function is as follows. TFIIIC mediates tRNA and 5S RNA gene activation by binding to intragenic promoter elements. Upstream of the transcription start site, TFIIIC assembles the initiation complex TFIIIB-TFIIIC-tDNA, which is sufficient for RNA polymerase III recruitment and function. Part of the tauA domain of TFIIIC that binds boxA DNA promoter sites of tRNA and similar genes. TFC4 is the TFIIIB-assembling subunit of TFIIIC and essential for viability. This chain is Transcription factor tau 131 kDa subunit (TFC4), found in Saccharomyces cerevisiae (strain ATCC 204508 / S288c) (Baker's yeast).